A 266-amino-acid polypeptide reads, in one-letter code: Lectin 7 (266 aa).

Positions 1–27 (MAINTSRTQILFITIISFLILAQNVNS) are cleaved as a signal peptide. 3 N-linked (GlcNAc...) asparagine glycosylation sites follow: asparagine 121, asparagine 205, and asparagine 219.

Belongs to the leguminous lectin family.

Functionally, may be involved in arbuscular mycorrhizal (AM) symbiosis with AM fungi. The polypeptide is Lectin 7 (Medicago truncatula (Barrel medic)).